The sequence spans 354 residues: Uroporphyrinogen decarboxylase (354 aa).

Substrate is bound by residues 27-31 (RQAGR), Asp-77, Tyr-154, Thr-209, and His-327.

The protein belongs to the uroporphyrinogen decarboxylase family. As to quaternary structure, homodimer.

The protein resides in the cytoplasm. The catalysed reaction is uroporphyrinogen III + 4 H(+) = coproporphyrinogen III + 4 CO2. It participates in porphyrin-containing compound metabolism; protoporphyrin-IX biosynthesis; coproporphyrinogen-III from 5-aminolevulinate: step 4/4. Functionally, catalyzes the decarboxylation of four acetate groups of uroporphyrinogen-III to yield coproporphyrinogen-III. The protein is Uroporphyrinogen decarboxylase of Salmonella dublin (strain CT_02021853).